The following is a 438-amino-acid chain: Adenosylhomocysteinase (438 aa).

Residues Thr-64, Asp-139, and Glu-164 each coordinate substrate. An NAD(+)-binding site is contributed by 165-167; that stretch reads TTT. Positions 194 and 198 each coordinate substrate. Residues Asn-199, 228 to 233, Glu-251, Asn-286, 307 to 309, and Asn-352 contribute to the NAD(+) site; these read GYGDVG and IGH.

Belongs to the adenosylhomocysteinase family. The cofactor is NAD(+).

Its subcellular location is the cytoplasm. It catalyses the reaction S-adenosyl-L-homocysteine + H2O = L-homocysteine + adenosine. It participates in amino-acid biosynthesis; L-homocysteine biosynthesis; L-homocysteine from S-adenosyl-L-homocysteine: step 1/1. May play a key role in the regulation of the intracellular concentration of adenosylhomocysteine. This chain is Adenosylhomocysteinase, found in Coxiella burnetii (strain Dugway 5J108-111).